The sequence spans 514 residues: Protein nucleotidyltransferase YdiU (514 aa).

G111, G113, R114, K134, D146, G147, R197, and R204 together coordinate ATP. D276 (proton acceptor) is an active-site residue. 2 residues coordinate Mg(2+): N277 and D286. D286 lines the ATP pocket.

It belongs to the SELO family. The cofactor is Mg(2+). Mn(2+) serves as cofactor.

It carries out the reaction L-seryl-[protein] + ATP = 3-O-(5'-adenylyl)-L-seryl-[protein] + diphosphate. The enzyme catalyses L-threonyl-[protein] + ATP = 3-O-(5'-adenylyl)-L-threonyl-[protein] + diphosphate. It catalyses the reaction L-tyrosyl-[protein] + ATP = O-(5'-adenylyl)-L-tyrosyl-[protein] + diphosphate. The catalysed reaction is L-histidyl-[protein] + UTP = N(tele)-(5'-uridylyl)-L-histidyl-[protein] + diphosphate. It carries out the reaction L-seryl-[protein] + UTP = O-(5'-uridylyl)-L-seryl-[protein] + diphosphate. The enzyme catalyses L-tyrosyl-[protein] + UTP = O-(5'-uridylyl)-L-tyrosyl-[protein] + diphosphate. Functionally, nucleotidyltransferase involved in the post-translational modification of proteins. It can catalyze the addition of adenosine monophosphate (AMP) or uridine monophosphate (UMP) to a protein, resulting in modifications known as AMPylation and UMPylation. In Rhodococcus jostii (strain RHA1), this protein is Protein nucleotidyltransferase YdiU.